The chain runs to 137 residues: Small ribosomal subunit protein uS11 (137 aa).

Residues Glu-116–Val-137 are disordered.

Belongs to the universal ribosomal protein uS11 family. As to quaternary structure, part of the 30S ribosomal subunit.

In terms of biological role, located on the platform of the 30S subunit. This chain is Small ribosomal subunit protein uS11, found in Methanopyrus kandleri (strain AV19 / DSM 6324 / JCM 9639 / NBRC 100938).